The primary structure comprises 436 residues: GTPase Der (436 aa).

2 EngA-type G domains span residues 4 to 167 and 176 to 351; these read PIVA…DEET and IRLS…ENHK. GTP is bound by residues 10–17, 57–61, 119–122, 182–189, 229–233, and 294–297; these read GRPNVGKS, DTGGI, NKVD, DTAGM, and NKWD. In terms of domain architecture, KH-like spans 352–436; the sequence is KRVQSSTLNE…PIHIIPRRRN (85 aa).

This sequence belongs to the TRAFAC class TrmE-Era-EngA-EngB-Septin-like GTPase superfamily. EngA (Der) GTPase family. As to quaternary structure, associates with the 50S ribosomal subunit.

GTPase that plays an essential role in the late steps of ribosome biogenesis. The sequence is that of GTPase Der from Staphylococcus haemolyticus (strain JCSC1435).